The sequence spans 396 residues: MDSIVQDAIDEAEESEDSASEPADVAGGGGDTVPTGTMTDNELEDVLQELQTNITVVGCGGAGSNTVDRMATEGIHGADLVAANTDVQHLVDIEADTKILMGQQKTKGRGAGSLPQVGEEAAIESQGEIRDSIAGSDMVFVTAGLGGGTGTGSAPVVAKAAREQGALTIAIVTTPFTAEGEVRRTNAEAGLERLRDVADTVIVVPNDRLLDSVGKLPVREAFKVSDEVLMRSVKGITELITKPGLVNLDFADVRTVMEKGGVAMIGLGEADSDAKAADSVQSALRSPLLDVDISSANSALVNVTGGPGMSIEEAEGVVEQLYDRIDPDARIIWGTSIDEQIQEEMRTMVVVTGVDSPQIYGRNEAAEGDGPAQESTPEPEPEPQAGSEIEDIDYVE.

The interval 1–38 (MDSIVQDAIDEAEESEDSASEPADVAGGGGDTVPTGTM) is disordered. Positions 8 to 19 (AIDEAEESEDSA) are enriched in acidic residues. GTP contacts are provided by residues 61-65 (GAGSN), 148-150 (GTG), Glu-179, Arg-183, and Asp-226. The interval 358–396 (QIYGRNEAAEGDGPAQESTPEPEPEPQAGSEIEDIDYVE) is disordered.

This sequence belongs to the FtsZ family. In terms of assembly, homodimer. Polymerizes to form a dynamic ring structure in a strictly GTP-dependent manner. Interacts directly with several other division proteins.

The protein resides in the cytoplasm. Essential cell division protein that forms a contractile ring structure (Z ring) at the future cell division site. The regulation of the ring assembly controls the timing and the location of cell division. One of the functions of the FtsZ ring is to recruit other cell division proteins to the septum to produce a new cell wall between the dividing cells. Binds GTP and shows GTPase activity. The chain is Cell division protein FtsZ 1 from Halobacterium salinarum (strain ATCC 29341 / DSM 671 / R1).